A 158-amino-acid chain; its full sequence is Toxin Tse2 (158 aa).

As to quaternary structure, forms a heterotetramer with Tsi2 consisting of two Tse2 dimers and two Tsi2 dimers. Formation of the complex inactivates Tse2 enzymatic activity.

It localises to the secreted. In terms of biological role, toxin secreted by the H1 type VI (H1-T6SS) secretion system into the cytoplasm of recipient cells. Acts likely as a NAD-dependent cytotoxin towards both prokaryotic and eukaryotic cells. The chain is Toxin Tse2 from Pseudomonas aeruginosa (strain ATCC 15692 / DSM 22644 / CIP 104116 / JCM 14847 / LMG 12228 / 1C / PRS 101 / PAO1).